Here is a 281-residue protein sequence, read N- to C-terminus: Nuclear receptor-interacting protein 2 (281 aa).

The interval 18 to 85 (ESCSTGQRQA…RAHLSQQRRL (68 aa)) is disordered. Residues 36 to 47 (TPPPSSPWPTPP) show a composition bias toward pro residues. Basic and acidic residues predominate over residues 55–78 (QEARRDEGEARTRGQEAQLRDRAH). The LXXLL motif motif lies at 244 to 248 (LQTLL).

In terms of assembly, interacts with NR1F2, RARA and THRB in a ligand-dependent manner.

It is found in the nucleus. Down-regulates transcriptional activation by nuclear receptors such as NR1F2. The sequence is that of Nuclear receptor-interacting protein 2 (NRIP2) from Homo sapiens (Human).